Consider the following 251-residue polypeptide: Ubiquinone/menaquinone biosynthesis C-methyltransferase UbiE (251 aa).

Residues T74, D95, 123–124 (NA), and S140 contribute to the S-adenosyl-L-methionine site.

Belongs to the class I-like SAM-binding methyltransferase superfamily. MenG/UbiE family.

The enzyme catalyses a 2-demethylmenaquinol + S-adenosyl-L-methionine = a menaquinol + S-adenosyl-L-homocysteine + H(+). The catalysed reaction is a 2-methoxy-6-(all-trans-polyprenyl)benzene-1,4-diol + S-adenosyl-L-methionine = a 5-methoxy-2-methyl-3-(all-trans-polyprenyl)benzene-1,4-diol + S-adenosyl-L-homocysteine + H(+). It functions in the pathway quinol/quinone metabolism; menaquinone biosynthesis; menaquinol from 1,4-dihydroxy-2-naphthoate: step 2/2. It participates in cofactor biosynthesis; ubiquinone biosynthesis. Methyltransferase required for the conversion of demethylmenaquinol (DMKH2) to menaquinol (MKH2) and the conversion of 2-polyprenyl-6-methoxy-1,4-benzoquinol (DDMQH2) to 2-polyprenyl-3-methyl-6-methoxy-1,4-benzoquinol (DMQH2). The protein is Ubiquinone/menaquinone biosynthesis C-methyltransferase UbiE of Salmonella paratyphi A (strain AKU_12601).